Here is a 249-residue protein sequence, read N- to C-terminus: Phosphatidylserine decarboxylase proenzyme (249 aa).

S208 serves as the catalytic Schiff-base intermediate with substrate; via pyruvic acid. Residue S208 is modified to Pyruvic acid (Ser); by autocatalysis.

The protein belongs to the phosphatidylserine decarboxylase family. PSD-A subfamily. As to quaternary structure, heterodimer of a large membrane-associated beta subunit and a small pyruvoyl-containing alpha subunit. Pyruvate serves as cofactor. Post-translationally, is synthesized initially as an inactive proenzyme. Formation of the active enzyme involves a self-maturation process in which the active site pyruvoyl group is generated from an internal serine residue via an autocatalytic post-translational modification. Two non-identical subunits are generated from the proenzyme in this reaction, and the pyruvate is formed at the N-terminus of the alpha chain, which is derived from the carboxyl end of the proenzyme. The post-translation cleavage follows an unusual pathway, termed non-hydrolytic serinolysis, in which the side chain hydroxyl group of the serine supplies its oxygen atom to form the C-terminus of the beta chain, while the remainder of the serine residue undergoes an oxidative deamination to produce ammonia and the pyruvoyl prosthetic group on the alpha chain.

Its subcellular location is the cell membrane. The catalysed reaction is a 1,2-diacyl-sn-glycero-3-phospho-L-serine + H(+) = a 1,2-diacyl-sn-glycero-3-phosphoethanolamine + CO2. The protein operates within phospholipid metabolism; phosphatidylethanolamine biosynthesis; phosphatidylethanolamine from CDP-diacylglycerol: step 2/2. Its function is as follows. Catalyzes the formation of phosphatidylethanolamine (PtdEtn) from phosphatidylserine (PtdSer). The chain is Phosphatidylserine decarboxylase proenzyme from Erythrobacter litoralis (strain HTCC2594).